The chain runs to 186 residues: uncharacterized protein (186 aa).

The disordered stretch occupies residues 156-186 (DTKELERTTQPPEHQKHHQEPREKRGMNKRD). Over residues 173–186 (HQEPREKRGMNKRD) the composition is skewed to basic and acidic residues.

This is an uncharacterized protein from Bacillus subtilis (strain 168).